We begin with the raw amino-acid sequence, 119 residues long: Large ribosomal subunit protein uL18 (119 aa).

The protein belongs to the universal ribosomal protein uL18 family. Part of the 50S ribosomal subunit; part of the 5S rRNA/L5/L18/L25 subcomplex. Contacts the 5S and 23S rRNAs.

Functionally, this is one of the proteins that bind and probably mediate the attachment of the 5S RNA into the large ribosomal subunit, where it forms part of the central protuberance. The chain is Large ribosomal subunit protein uL18 from Mycoplasmoides gallisepticum (strain R(low / passage 15 / clone 2)) (Mycoplasma gallisepticum).